The following is a 463-amino-acid chain: Probable mannan endo-1,4-beta-mannosidase F (463 aa).

A signal peptide spans methionine 1 to alanine 18. Residues glutamine 19 to valine 54 enclose the CBM1 domain. Positions alanine 57–isoleucine 78 are disordered. Low complexity predominate over residues serine 59–serine 77. The ser-rich linker stretch occupies residues serine 75–serine 118. Asparagine 87 carries N-linked (GlcNAc...) asparagine glycosylation. The span at serine 93–serine 118 shows a compositional bias: low complexity. The segment at serine 93 to lysine 121 is disordered. Residues phenylalanine 119–asparagine 463 form a catalytic region. Substrate contacts are provided by tryptophan 171 and asparagine 285. Glutamate 286 functions as the Proton donor/acceptor in the catalytic mechanism. Residue tyrosine 361 participates in substrate binding. Catalysis depends on glutamate 395, which acts as the Nucleophile. Position 424 (tryptophan 424) interacts with substrate.

Belongs to the glycosyl hydrolase 5 (cellulase A) family.

It is found in the secreted. It carries out the reaction Random hydrolysis of (1-&gt;4)-beta-D-mannosidic linkages in mannans, galactomannans and glucomannans.. Endo-1,4-mannanase, a crucial enzyme for depolymerization of seed galactomannans and wood galactoglucomannans. In Aspergillus oryzae (strain ATCC 42149 / RIB 40) (Yellow koji mold), this protein is Probable mannan endo-1,4-beta-mannosidase F (manF).